Consider the following 162-residue polypeptide: Regulator of sigma D (162 aa).

It belongs to the Rsd/AlgQ family. In terms of assembly, interacts with RpoD.

Its subcellular location is the cytoplasm. Binds RpoD and negatively regulates RpoD-mediated transcription activation by preventing the interaction between the primary sigma factor RpoD with the catalytic core of the RNA polymerase and with promoter DNA. May be involved in replacement of the RNA polymerase sigma subunit from RpoD to RpoS during the transition from exponential growth to the stationary phase. This is Regulator of sigma D from Salmonella paratyphi A (strain ATCC 9150 / SARB42).